A 120-amino-acid chain; its full sequence is Phosphoribosyl-ATP pyrophosphatase (120 aa).

It belongs to the PRA-PH family.

It is found in the cytoplasm. It catalyses the reaction 1-(5-phospho-beta-D-ribosyl)-ATP + H2O = 1-(5-phospho-beta-D-ribosyl)-5'-AMP + diphosphate + H(+). It functions in the pathway amino-acid biosynthesis; L-histidine biosynthesis; L-histidine from 5-phospho-alpha-D-ribose 1-diphosphate: step 2/9. The chain is Phosphoribosyl-ATP pyrophosphatase from Methylibium petroleiphilum (strain ATCC BAA-1232 / LMG 22953 / PM1).